The following is a 330-amino-acid chain: Methionine import ATP-binding protein MetN (330 aa).

The 240-residue stretch at 2 to 241 (IAFRGVSKVY…PSTRLHQLCF (240 aa)) folds into the ABC transporter domain. 38 to 45 (GQSGAGKS) provides a ligand contact to ATP.

The protein belongs to the ABC transporter superfamily. Methionine importer (TC 3.A.1.24) family. The complex is composed of two ATP-binding proteins (MetN), two transmembrane proteins (MetI) and a solute-binding protein (MetQ).

It localises to the cell inner membrane. The catalysed reaction is L-methionine(out) + ATP + H2O = L-methionine(in) + ADP + phosphate + H(+). It catalyses the reaction D-methionine(out) + ATP + H2O = D-methionine(in) + ADP + phosphate + H(+). Part of the ABC transporter complex MetNIQ involved in methionine import. Responsible for energy coupling to the transport system. The sequence is that of Methionine import ATP-binding protein MetN from Myxococcus xanthus (strain DK1622).